The chain runs to 794 residues: Zinc finger and BTB domain-containing protein 17 (794 aa).

In terms of domain architecture, BTB spans 1–104 (MDFPQHSQRV…VASFLQMQDI (104 aa)). The segment at 116-285 (EPSSTTGESA…QNLRSGTYGD (170 aa)) is disordered. A compositionally biased stretch (basic and acidic residues) spans 132-142 (GGDKRAKDEKA). Residues 203 to 216 (SSMAAAEAEALSES) are compositionally biased toward low complexity. Residues 243–252 (VKEEGMHLDN) show a composition bias toward basic and acidic residues. Positions 254-263 (EPPEENEESA) are enriched in acidic residues. Positions 260-299 (EESAGTDSGQELGMEGQNLRSGTYGDRTESKAYGSIIHKC) are interaction with MYC. 13 consecutive C2H2-type zinc fingers follow at residues 297–319 (HKCE…IRIH), 325–347 (FSCR…EKTH), 353–375 (YGCE…KKRH), 381–403 (YRCG…QLVH), 409–431 (YQCD…LETH), 437–459 (HKCP…LKIH), 465–487 (LKCR…LRIH), 493–515 (YVCT…VRIH), 519–543 (KPCQ…VRQH), 549–571 (YVCE…IRHH), 577–599 (HKCS…IIIH), 605–628 (YLCD…KTVH), and 708–730 (YACD…VRIH). Lysine 388 is covalently cross-linked (Glycyl lysine isopeptide (Lys-Gly) (interchain with G-Cter in ubiquitin)). Residue lysine 472 forms a Glycyl lysine isopeptide (Lys-Gly) (interchain with G-Cter in ubiquitin) linkage. An interaction with MYC region spans residues 628 to 709 (HQGKAGIKIL…EDPNTHILYA (82 aa)). The segment at 628–794 (HQGKAGIKIL…TAPDCLPPAE (167 aa)) is interaction with HCFC1. Residues 769 to 794 (PRDGTEGQPTLAESPPTAPDCLPPAE) form a disordered region. Over residues 784–794 (PTAPDCLPPAE) the composition is skewed to pro residues.

Belongs to the krueppel C2H2-type zinc-finger protein family. Homooligomerizes (via the BTB/POZ domain), multimerization is required for DNA binding. Binds to the C-terminal helix-loop-helix motif of MYC which inhibits ZBTB17 transactivation and growth arrest activities and renders it insoluble in the nucleus. Also interacts with HCFC1, MAGEA4 and TMPRSS11A. Interacts (via the C-terminal zinc fingers) with GFI1; the interaction results in the recruitment of MYC to the CDKN1A/p21 and CDKN1B promoters and repression of transcription. Interacts with TRAF2, interfering with the binding of UBC13 to TRAF2, and inhibiting TRAF2 E3 ligase activity. Interacts with BCL6; the interaction inhibits ZBTB17 transactivation activity on target genes involved in cell cycle arrest. Interacts with ZBTB49; this interaction blocks ZBTB17-mediated repression of RB1. Post-translationally, undergoes 'Lys-48'-linked polyubiquitination at Lys-388 and Lys-472 and subsequent proteasomal degradation in a TRAF2-dependent manner and upon TNFA stimulation. In terms of tissue distribution, found in all the embryonic and adult tissues examined.

Its subcellular location is the nucleus. Functionally, transcription factor that can function as an activator or repressor depending on its binding partners, and by targeting negative regulators of cell cycle progression. Has been shown to bind to the promoters of adenovirus major late protein and cyclin D1 and activate transcription. Required for early embryonic development during gastrulation. Plays a critical role in early lymphocyte development, where it is essential to prevent apoptosis in lymphoid precursors, allowing them to survive in response to IL7 and undergo proper lineage commitment. Represses RB1 transcription; this repression can be blocked by interaction with ZBTB49. This chain is Zinc finger and BTB domain-containing protein 17 (Zbtb17), found in Mus musculus (Mouse).